A 353-amino-acid chain; its full sequence is Fe(3+) ions import ATP-binding protein FbpC (353 aa).

One can recognise an ABC transporter domain in the interval 9 to 239 (VTFENVTKKF…PASAFIADFM (231 aa)). 41-48 (GPSGCGKT) is a binding site for ATP.

This sequence belongs to the ABC transporter superfamily. Fe(3+) ion importer (TC 3.A.1.10) family. The complex is composed of two ATP-binding proteins (FbpC), two transmembrane proteins (FbpB) and a solute-binding protein (FbpA).

The protein resides in the cell inner membrane. It carries out the reaction Fe(3+)(out) + ATP + H2O = Fe(3+)(in) + ADP + phosphate + H(+). Its function is as follows. Part of the ABC transporter complex FbpABC involved in Fe(3+) ions import. Responsible for energy coupling to the transport system. This Brucella suis biovar 1 (strain 1330) protein is Fe(3+) ions import ATP-binding protein FbpC.